Reading from the N-terminus, the 1098-residue chain is Mediator of RNA polymerase II transcription subunit 5 (1098 aa).

The segment at 1019–1041 is disordered; the sequence is PDDVQKSADMKPDTGIKEDDSEK. Residues 1021–1041 show a composition bias toward basic and acidic residues; the sequence is DVQKSADMKPDTGIKEDDSEK.

Belongs to the Mediator complex subunit 5 family. Component of the Mediator complex.

Its subcellular location is the nucleus. Component of the Mediator complex, a coactivator involved in the regulated transcription of nearly all RNA polymerase II-dependent genes. Mediator functions as a bridge to convey information from gene-specific regulatory proteins to the basal RNA polymerase II transcription machinery. Mediator is recruited to promoters by direct interactions with regulatory proteins and serves as a scaffold for the assembly of a functional preinitiation complex with RNA polymerase II and the general transcription factors. The chain is Mediator of RNA polymerase II transcription subunit 5 (NUT1) from Eremothecium gossypii (strain ATCC 10895 / CBS 109.51 / FGSC 9923 / NRRL Y-1056) (Yeast).